The primary structure comprises 346 residues: Uroporphyrinogen decarboxylase (346 aa).

Residues 21-25, Asp-71, Tyr-146, Ser-201, and His-316 contribute to the substrate site; that span reads RQAGR.

Belongs to the uroporphyrinogen decarboxylase family. Homodimer.

It is found in the cytoplasm. It carries out the reaction uroporphyrinogen III + 4 H(+) = coproporphyrinogen III + 4 CO2. The protein operates within porphyrin-containing compound metabolism; protoporphyrin-IX biosynthesis; coproporphyrinogen-III from 5-aminolevulinate: step 4/4. In terms of biological role, catalyzes the decarboxylation of four acetate groups of uroporphyrinogen-III to yield coproporphyrinogen-III. This Rickettsia massiliae (strain Mtu5) protein is Uroporphyrinogen decarboxylase.